A 428-amino-acid polypeptide reads, in one-letter code: Dihydroorotase (428 aa).

Positions 61 and 63 each coordinate Zn(2+). Substrate-binding positions include 63 to 65 (HLR) and N95. D153, H180, and H233 together coordinate Zn(2+). N279 contacts substrate. A Zn(2+)-binding site is contributed by D306. The active site involves D306. Residues H310 and 324-325 (FG) contribute to the substrate site.

It belongs to the metallo-dependent hydrolases superfamily. DHOase family. Class I DHOase subfamily. Requires Zn(2+) as cofactor.

It catalyses the reaction (S)-dihydroorotate + H2O = N-carbamoyl-L-aspartate + H(+). It functions in the pathway pyrimidine metabolism; UMP biosynthesis via de novo pathway; (S)-dihydroorotate from bicarbonate: step 3/3. Its function is as follows. Catalyzes the reversible cyclization of carbamoyl aspartate to dihydroorotate. This chain is Dihydroorotase, found in Geobacillus kaustophilus (strain HTA426).